Reading from the N-terminus, the 263-residue chain is Peptidoglycan-N-acetylmuramic acid deacetylase PdaA (263 aa).

An N-terminal signal peptide occupies residues M1–A23. One can recognise a NodB homology domain in the interval K66–K247. D73 acts as the Proton acceptor in catalysis. Residues H124 and H128 each coordinate a divalent metal cation. The active-site Proton donor is H222.

This sequence belongs to the polysaccharide deacetylase family.

Catalyzes the deacetylation of N-acetylmuramic acid (MurNAc) residues in glycan strands of peptidoglycan, leading to the formation of muramic delta-lactam residues in spore cortex, after transpeptidation of deacetylated muramic acid residues. PdaA probably carries out both deacetylation and lactam ring formation and requires the product of CwlD activity on peptidoglycan as a substrate. Is required for germination. Cannot use chitin oligomer (hexa-N-acetylchitohexaose) as a substrate. The sequence is that of Peptidoglycan-N-acetylmuramic acid deacetylase PdaA (pdaA) from Bacillus subtilis (strain 168).